We begin with the raw amino-acid sequence, 465 residues long: G1/S-specific cyclin CLN3 (465 aa).

The region spanning 44-171 (EMLHHLLSVE…HILKSLEWVV (128 aa)) is the Cyclin N-terminal domain.

Belongs to the cyclin family. Interacts with CDC28 and SLA1. Post-translationally, hyperphosphorylated. GRR1 preferentially mediates the degradation of hyperphosphorylated CLN3.

Its function is as follows. G1/S-specific cyclin essential for the control of the cell cycle at the G1/S (start) transition. CLN3 may be an upstream activator of the G1 cyclins which directly catalyze start. Required for budding and for cell cycle progression and morphogenesis in environment-induced hyphae. Degradation is mediated by GRR1. Through binding to CDC28, controls the phosphorylation of SLA1 which regulates cortical actin patch dynamics. The protein is G1/S-specific cyclin CLN3 (CLN3) of Candida albicans (strain SC5314 / ATCC MYA-2876) (Yeast).